The sequence spans 341 residues: MSASQFGSRFVITTFGESHGTALGVVIDGCPAGVNFDEGLLKKELERRRPGHHGSGQIVSGRQETDAPEVLSGVFDGKTLGTPMAIIVRNQDARSQDYSVIKNSPRAGHADDMWRNKFGHSDHRGGGRSSGRETVSRVMAGSVAQMMMKHVSAPTKVIGYASQIGPMTLTDAERAEVSKKDIDSFQARFPSSRDQEVADLLKKAQDNGESHGGVAEILIQNPPAHLGQPVFHKLKSDLAMAFLSVGATNGFELGLGFEAAEVKGTQFHQGPQDAYGGIRGGISTGESILLRVSFKPTSSILDVAKKGRHDPCIVTRAIPVLEAMTWLVLADHYLWSKTDRI.

Disordered regions lie at residues 45-64 (LERR…GRQE) and 109-134 (HADD…GRET). Arg-48 lines the NADP(+) pocket. FMN-binding positions include 128 to 130 (RSS), Gly-280, 295 to 299 (KPTSS), and Arg-308.

The protein belongs to the chorismate synthase family. Homotetramer. It depends on FMNH2 as a cofactor.

It carries out the reaction 5-O-(1-carboxyvinyl)-3-phosphoshikimate = chorismate + phosphate. The protein operates within metabolic intermediate biosynthesis; chorismate biosynthesis; chorismate from D-erythrose 4-phosphate and phosphoenolpyruvate: step 7/7. Functionally, catalyzes the anti-1,4-elimination of the C-3 phosphate and the C-6 proR hydrogen from 5-enolpyruvylshikimate-3-phosphate (EPSP) to yield chorismate, which is the branch point compound that serves as the starting substrate for the three terminal pathways of aromatic amino acid biosynthesis. This reaction introduces a second double bond into the aromatic ring system. The polypeptide is Chorismate synthase (Bdellovibrio bacteriovorus (strain ATCC 15356 / DSM 50701 / NCIMB 9529 / HD100)).